The primary structure comprises 554 residues: HMG box-containing protein 4 (554 aa).

Disordered regions lie at residues 15–368 and 417–469; these read GTED…AYQV and HKQN…PAKV. Basic and acidic residues predominate over residues 75 to 88; the sequence is SSDDYHADHSTDSA. Residues 95–105 show a composition bias toward low complexity; sequence SLPSPSSSDTA. The segment covering 113 to 123 has biased composition (polar residues); it reads TSPQADTSTTH. Basic and acidic residues-rich tracts occupy residues 145–154 and 217–226; these read PHKDYHKKSG and LGREEIESRS. Over residues 236-251 the composition is skewed to polar residues; it reads YTPRSGGTPDSASSTG. The span at 268-296 shows a compositional bias: basic residues; the sequence is MKKKKKSKKSKKKKDKHKDEKHKKHSKSK. The segment covering 313–332 has biased composition (pro residues); that stretch reads LPSPPPPPATTPPTSPPSIP. The segment covering 341–357 has biased composition (basic and acidic residues); it reads HTEEQSDKKKKKEDPEK. Residues 359 to 427 constitute a DNA-binding region (HMG box); that stretch reads KKKNMSAYQV…KQNKAEATTV (69 aa). Composition is skewed to low complexity over residues 433 to 445 and 454 to 467; these read SSES…GSSS and SPTS…TSPA.

In terms of assembly, interacts with nlk.2.

It is found in the nucleus. Negatively regulates Wnt/beta-catenin signaling during development. In Xenopus laevis (African clawed frog), this protein is HMG box-containing protein 4 (hmgxb4).